The chain runs to 929 residues: MARKGKVNTLPQPQGKHQRKGKKQLENKILHSYEEESAGFDSEELEDNDEQGYSFGVNSEDDEEIDSDEAFDEEDEKRFADWSFNASKSGKSNKDHKNLNNTKEISLNEEDDSDDSVNSDKLENEGSVGSSIDENELVDLDTLLDNDQPEKNESNTASTIRPPWIGNNDHATDKENLLESDASSSNDSESELTDSADNMNESDSESEIESSDSDHDDGENSDSKLDNLRNYIVSLNQKRKKDEADAESVLSSDDNDSIEEISIKKVKYDPHETNKESEYNLIGSSEKTIDITDLLDSIPMNEQLKVSLKPLVSESSSISSKKLDAPLAKSIQDRLERQAAYEQTKNDLEKWKPIVADNRKSDQLIFPMNETARPVPSNNGLASSFEPRTESERKMHQALLDAGLENESALKKQEELALNKLSVEEVAERTRQLRFMRELMFREERKAKRVAKIKSKTYRKIRKNRKEKEMALIPKSEEDLENERIKSEEARALERMTQRHKNTSSWTRKMLERASHGEGTREAVNEQIRKGDELMQRIHGKEISEMDGEDVSEFSDSDYDTNEQVSTAFEKIRNEEEPKLKGVLGMKFMRDASNRQKALVQDEMQAFEDELAGVPNEDDTSQKGEDGVPGVLIGNNTGRRSFKPSEEAAKLSLPSRKNPFVSDSAVLKVNKPEMKEGQKKAEARKKKESPLEATEETNPWLQVPDQRTSSAKKLDKNSSKADKKNHKLKMDKVASLQELVEEPKVQPDLIFEEKAFESASEAESDVDVSVPMLKPTKGRLSIKQRELVAKAFAGDDVVAEFEKDKEDWVQEDAPKEEDHSLPGWGSWGGVGVKQRKTKPKVKKIAGLDPSKRKDSKLKHVIINEKRNKKAAKLTADSVPFPFESREQYERSLNLPMGPEWTTRASHHKAVAPRVVTKRGKVINPIKAPN.

Positions 1–257 are disordered; that stretch reads MARKGKVNTL…SVLSSDDNDS (257 aa). The span at 23–34 shows a compositional bias: basic and acidic residues; sequence KQLENKILHSYE. Composition is skewed to acidic residues over residues 35-50, 59-75, 107-117, 133-144, and 188-220; these read EESAGFDSEELEDNDE, SEDDEEIDSDEAFDEED, LNEEDDSDDSV, DENELVDLDTLL, and SESELTDSADNMNESDSESEIESSDSDHDDGEN. A phosphoserine mark is found at Ser-251, Ser-555, and Ser-557. The interval 602-729 is disordered; the sequence is DEMQAFEDEL…KADKKNHKLK (128 aa). Residues 605–619 show a composition bias toward acidic residues; that stretch reads QAFEDELAGVPNEDD. Residues 670–681 are compositionally biased toward basic and acidic residues; sequence NKPEMKEGQKKA. Residues 696-711 are compositionally biased toward polar residues; sequence ETNPWLQVPDQRTSSA. The segment covering 712-729 has biased composition (basic and acidic residues); that stretch reads KKLDKNSSKADKKNHKLK. Ser-758, Ser-760, and Ser-764 each carry phosphoserine. Residues 805-820 show a composition bias toward basic and acidic residues; sequence KEDWVQEDAPKEEDHS. The tract at residues 805–843 is disordered; the sequence is KEDWVQEDAPKEEDHSLPGWGSWGGVGVKQRKTKPKVKK. The segment covering 833–843 has biased composition (basic residues); the sequence is KQRKTKPKVKK.

This sequence to yeast YML093w.

It is found in the nucleus. Its subcellular location is the nucleolus. This is an uncharacterized protein from Schizosaccharomyces pombe (strain 972 / ATCC 24843) (Fission yeast).